The following is a 220-amino-acid chain: Ribosomal RNA small subunit methyltransferase G 1 (220 aa).

The S-adenosyl-L-methionine site is built by Gly79, Phe84, and Arg150.

Belongs to the methyltransferase superfamily. RNA methyltransferase RsmG family.

It is found in the cytoplasm. It catalyses the reaction guanosine(527) in 16S rRNA + S-adenosyl-L-methionine = N(7)-methylguanosine(527) in 16S rRNA + S-adenosyl-L-homocysteine. Specifically methylates the N7 position of guanine in position 527 of 16S rRNA. The polypeptide is Ribosomal RNA small subunit methyltransferase G 1 (Syntrophobacter fumaroxidans (strain DSM 10017 / MPOB)).